Here is a 206-residue protein sequence, read N- to C-terminus: Dephospho-CoA kinase (206 aa).

Residues 4–200 enclose the DPCK domain; sequence TVALTGGIGS…ASYLKLASQF (197 aa). Residue 12-17 participates in ATP binding; that stretch reads GSGKST.

This sequence belongs to the CoaE family.

It is found in the cytoplasm. It carries out the reaction 3'-dephospho-CoA + ATP = ADP + CoA + H(+). Its pathway is cofactor biosynthesis; coenzyme A biosynthesis; CoA from (R)-pantothenate: step 5/5. Functionally, catalyzes the phosphorylation of the 3'-hydroxyl group of dephosphocoenzyme A to form coenzyme A. The protein is Dephospho-CoA kinase of Salmonella paratyphi A (strain ATCC 9150 / SARB42).